The following is a 466-amino-acid chain: Muscarinic acetylcholine receptor M2 (466 aa).

The Extracellular portion of the chain corresponds to 1–25 (MNNSTYINSSSENVIALESPYKTIE). N-linked (GlcNAc...) asparagine glycans are attached at residues asparagine 2, asparagine 3, and asparagine 8. Residues 26–48 (VVFIVLVAGSLSLVTIIGNILVM) traverse the membrane as a helical segment. Residues 49 to 62 (VSIKVNRHLQTVNN) lie on the Cytoplasmic side of the membrane. The chain crosses the membrane as a helical span at residues 63–83 (YFLFSLACADLIIGIFSMNLY). The Extracellular segment spans residues 84 to 100 (TLYTVIGYWPLGPVVCD). Cysteine 99 and cysteine 179 are joined by a disulfide. A helical membrane pass occupies residues 101 to 122 (LWLALDYVVSNASVMNLLIISF). The short motif at 123–125 (DRY) is the Important for signaling element. The Cytoplasmic segment spans residues 123-142 (DRYFCVTKPLTYPVKRTTKM). Residues 143-165 (AGMMIAAAWVLSFILWAPAILFW) form a helical membrane-spanning segment. Over 166–187 (QFIVGGRTVPDKDCYIQFFSNP) the chain is Extracellular. Residues 188–212 (AVTFGTAIAAFYLPVIIMTVLYWQI) traverse the membrane as a helical segment. The Cytoplasmic portion of the chain corresponds to 213–387 (SRASKSRIKK…PPSREKKVTR (175 aa)). Disordered regions lie at residues 223–265 (GKKE…KVQN) and 279–315 (QGEE…SASQ). Composition is skewed to polar residues over residues 228–238 (AQNQDPVSPSL) and 246–256 (PNNNNIPTSSD). A compositionally biased stretch (low complexity) spans 287 to 298 (NDSTSVSVVPSN). A helical transmembrane segment spans residues 388 to 410 (TILAILLAFIITWTPYNVMVLIN). At 411–418 (SFCASCIP) the chain is on the extracellular side. A disulfide bridge links cysteine 413 with cysteine 416. Residues 419-442 (GTVWTIGYWLCYINSTINPACYAL) form a helical membrane-spanning segment. The Important for signaling motif lies at 436 to 440 (NPACY). Residues 443-466 (CNATFKKTFKHLLMCHYKNIGATR) are Cytoplasmic-facing. Threonine 446, threonine 450, and threonine 465 each carry phosphothreonine.

It belongs to the G-protein coupled receptor 1 family. Muscarinic acetylcholine receptor subfamily. CHRM2 sub-subfamily.

The protein resides in the cell membrane. Its subcellular location is the postsynaptic cell membrane. In terms of biological role, the muscarinic acetylcholine receptor mediates various cellular responses, including inhibition of adenylate cyclase, breakdown of phosphoinositides and modulation of potassium channels through the action of G proteins. Primary transducing effect is adenylate cyclase inhibition. Signaling promotes phospholipase C activity, leading to the release of inositol trisphosphate (IP3); this then triggers calcium ion release into the cytosol. This Gallus gallus (Chicken) protein is Muscarinic acetylcholine receptor M2 (CHRM2).